The following is a 331-amino-acid chain: Ferrochelatase (331 aa).

Residues His-187 and Glu-286 each coordinate Fe cation.

This sequence belongs to the ferrochelatase family.

The protein localises to the cytoplasm. It catalyses the reaction heme b + 2 H(+) = protoporphyrin IX + Fe(2+). It participates in porphyrin-containing compound metabolism; protoheme biosynthesis; protoheme from protoporphyrin-IX: step 1/1. Its function is as follows. Catalyzes the ferrous insertion into protoporphyrin IX. The sequence is that of Ferrochelatase from Legionella pneumophila (strain Corby).